The sequence spans 115 residues: Large ribosomal subunit protein bL20c (115 aa).

It belongs to the bacterial ribosomal protein bL20 family.

The protein localises to the plastid. It localises to the chloroplast. Binds directly to 23S ribosomal RNA and is necessary for the in vitro assembly process of the 50S ribosomal subunit. It is not involved in the protein synthesizing functions of that subunit. The polypeptide is Large ribosomal subunit protein bL20c (rpl20) (Cyanidium caldarium (Red alga)).